The following is a 177-amino-acid chain: Nucleoside triphosphate/diphosphate phosphatase (177 aa).

The active-site Proton donor is the Arg23. Residues Asn87, Asp103, Asp105, Asp107, Asp120, and Glu123 each contribute to the Mg(2+) site.

Belongs to the Ntdp family. The cofactor is Mg(2+).

It catalyses the reaction a ribonucleoside 5'-triphosphate + H2O = a ribonucleoside 5'-diphosphate + phosphate + H(+). It carries out the reaction a ribonucleoside 5'-diphosphate + H2O = a ribonucleoside 5'-phosphate + phosphate + H(+). Has nucleoside phosphatase activity towards nucleoside triphosphates and nucleoside diphosphates. The sequence is that of Nucleoside triphosphate/diphosphate phosphatase from Streptococcus pyogenes serotype M1.